A 188-amino-acid chain; its full sequence is NADH-quinone oxidoreductase subunit B 1 (188 aa).

[4Fe-4S] cluster is bound by residues Cys39, Cys40, Cys105, and Cys134.

It belongs to the complex I 20 kDa subunit family. As to quaternary structure, NDH-1 is composed of 14 different subunits. Subunits NuoB, C, D, E, F, and G constitute the peripheral sector of the complex. [4Fe-4S] cluster serves as cofactor.

It localises to the cell inner membrane. It carries out the reaction a quinone + NADH + 5 H(+)(in) = a quinol + NAD(+) + 4 H(+)(out). In terms of biological role, NDH-1 shuttles electrons from NADH, via FMN and iron-sulfur (Fe-S) centers, to quinones in the respiratory chain. The immediate electron acceptor for the enzyme in this species is believed to be ubiquinone. Couples the redox reaction to proton translocation (for every two electrons transferred, four hydrogen ions are translocated across the cytoplasmic membrane), and thus conserves the redox energy in a proton gradient. In Solibacter usitatus (strain Ellin6076), this protein is NADH-quinone oxidoreductase subunit B 1.